A 378-amino-acid polypeptide reads, in one-letter code: Alanine racemase (378 aa).

Lysine 40 acts as the Proton acceptor; specific for D-alanine in catalysis. Residue lysine 40 is modified to N6-(pyridoxal phosphate)lysine. Substrate is bound at residue arginine 140. The active-site Proton acceptor; specific for L-alanine is tyrosine 270. Residue methionine 317 coordinates substrate.

The protein belongs to the alanine racemase family. It depends on pyridoxal 5'-phosphate as a cofactor.

The enzyme catalyses L-alanine = D-alanine. Its pathway is amino-acid biosynthesis; D-alanine biosynthesis; D-alanine from L-alanine: step 1/1. Functionally, catalyzes the interconversion of L-alanine and D-alanine. May also act on other amino acids. The chain is Alanine racemase (alr) from Lacticaseibacillus paracasei (strain ATCC 334 / BCRC 17002 / CCUG 31169 / CIP 107868 / KCTC 3260 / NRRL B-441) (Lactobacillus paracasei).